We begin with the raw amino-acid sequence, 189 residues long: Endoribonuclease YbeY (189 aa).

Zn(2+) is bound by residues histidine 146, histidine 150, and histidine 156.

This sequence belongs to the endoribonuclease YbeY family. Zn(2+) serves as cofactor.

It is found in the cytoplasm. Functionally, single strand-specific metallo-endoribonuclease involved in late-stage 70S ribosome quality control and in maturation of the 3' terminus of the 16S rRNA. This Prochlorococcus marinus (strain MIT 9211) protein is Endoribonuclease YbeY.